A 211-amino-acid polypeptide reads, in one-letter code: MEIENSSDLIIDGLYSFLSAGVDEVGRGALFGPVVAAAVILPEDVLDDLASTGVTDSKKLTEKRRCHLASLIRTVAWDCQIGIASVREIDRLNILKASLLAMKRAVLRLKLRPDLVLVDGNQEIRDLFIPQRTVVKGDSKCLAIAAASIVAKVWRDTLIMRLAKKYPVYDLTKNKGYGTKKHKQGIINYGVSPQHRLSFSPCQPSLFEVRS.

One can recognise an RNase H type-2 domain in the interval 17-211 (FLSAGVDEVG…CQPSLFEVRS (195 aa)). A divalent metal cation contacts are provided by D23, E24, and D119.

This sequence belongs to the RNase HII family. Mn(2+) serves as cofactor. Requires Mg(2+) as cofactor.

Its subcellular location is the cytoplasm. The catalysed reaction is Endonucleolytic cleavage to 5'-phosphomonoester.. Its function is as follows. Endonuclease that specifically degrades the RNA of RNA-DNA hybrids. The polypeptide is Ribonuclease HII (Trichodesmium erythraeum (strain IMS101)).